We begin with the raw amino-acid sequence, 421 residues long: Zinc finger protein 57 (421 aa).

The KRAB domain maps to 15–88; it reads VSYEDVAVSF…SCTGVFKGGP (74 aa). A C2H2-type 1; degenerate zinc finger spans residues 90-113; that stretch reads FFCLTCGKCFKKNTFLFNHQFPVR. 2 C2H2-type zinc fingers span residues 140-162 and 168-190; these read FFCN…RRAH and RSCP…LKVH. The tract at residues 191 to 221 is disordered; the sequence is QNKPAASNQAGNQASNQRLKSRVPPTTPRSQ. The span at 195 to 207 shows a compositional bias: low complexity; that stretch reads AASNQAGNQASNQ. The segment at 264–286 adopts a C2H2-type 4 zinc-finger fold; it reads ISCPYCHITFTMRTCLLTHLKIH. Residues 313–332 form a C2H2-type 5; degenerate zinc finger; it reads YTCPVCDSSFRGKESLLDHL. Residues 371-421 are disordered; the sequence is GKRMESRRRRRKRACTENPETEGLSGKGRVAPWEMEGATSPESPVTEEDSD.

It belongs to the krueppel C2H2-type zinc-finger protein family. In terms of tissue distribution, expressed in oocytes and in a subset of adult tissues. Expressed at high levels in testis, and at low levels in cerebellum. Present in sciatic nerve and spinal cord (at protein level).

It is found in the nucleus. Transcription regulator required to maintain maternal and paternal gene imprinting, a process by which gene expression is restricted in a parent of origin-specific manner by epigenetic modification of genomic DNA and chromatin, including DNA methylation. Acts by controlling DNA methylation during the earliest multicellular stages of development at multiple imprinting control regions (ICRs). Acts together with ZNF445, but ZFP57 plays the predominant role in imprinting maintenance. In contrast, in humans, ZNF445 seems to be the major factor early embryonic imprinting maintenance. Required for the establishment of maternal methylation imprints at SNRPN locus. Acts as a transcriptional repressor in Schwann cells. Binds to a 5'-TGCCGC-3' consensus sequence and recognizes the methylated CpG within this element. The protein is Zinc finger protein 57 (Zfp57) of Mus musculus (Mouse).